Consider the following 223-residue polypeptide: Large ribosomal subunit protein uL6c (223 aa).

Residues 1–41 constitute a chloroplast transit peptide; that stretch reads MASSLVSSFQPRSAFLGDRNVFKVSSTPFAQVGYSSKTIEC.

The protein belongs to the universal ribosomal protein uL6 family. In terms of assembly, part of the 50S ribosomal subunit.

Its subcellular location is the plastid. It localises to the chloroplast. This protein binds directly to 23S ribosomal RNA and is located at the aminoacyl-tRNA binding site of the peptidyltransferase center. The chain is Large ribosomal subunit protein uL6c (RPL6) from Arabidopsis thaliana (Mouse-ear cress).